The primary structure comprises 485 residues: Adenosylhomocysteinase (485 aa).

Substrate-binding residues include T64, D139, and E205. 206-208 (TTT) serves as a coordination point for NAD(+). 2 residues coordinate substrate: K235 and D239. Residues N240, 269–274 (GYGDVG), E292, N327, 348–350 (IGH), and N397 contribute to the NAD(+) site.

It belongs to the adenosylhomocysteinase family. Requires NAD(+) as cofactor.

It carries out the reaction S-adenosyl-L-homocysteine + H2O = L-homocysteine + adenosine. The protein operates within amino-acid biosynthesis; L-homocysteine biosynthesis; L-homocysteine from S-adenosyl-L-homocysteine: step 1/1. Its function is as follows. Adenosylhomocysteine is a competitive inhibitor of S-adenosyl-L-methionine-dependent methyl transferase reactions; therefore adenosylhomocysteinase may play a key role in the control of methylations via regulation of the intracellular concentration of adenosylhomocysteine. This is Adenosylhomocysteinase (SAHH) from Lupinus luteus (European yellow lupine).